The chain runs to 154 residues: MGLSDGEWQLVLNVWGKVEADLAGHGQDVLIRLFKGHPETLEKFDKFKHLKTEADMKASEDLKKHGNTVLTALGAILKKKGHHDAELKPLAQSHATKHKIPIKYLEFISEAIIHVLHSRHPAEFGADAQGAMNKALELFRKDIAAKYKELGFHG.

The Globin domain occupies 2–148; that stretch reads GLSDGEWQLV…FRKDIAAKYK (147 aa). Ser4 is subject to Phosphoserine. His65 lines the nitrite pocket. His65 is a binding site for O2. Residue Thr68 is modified to Phosphothreonine. Residue His94 participates in heme b binding.

Belongs to the globin family. Monomeric.

The protein localises to the cytoplasm. The protein resides in the sarcoplasm. It carries out the reaction Fe(III)-heme b-[protein] + nitric oxide + H2O = Fe(II)-heme b-[protein] + nitrite + 2 H(+). It catalyses the reaction H2O2 + AH2 = A + 2 H2O. Functionally, monomeric heme protein which primary function is to store oxygen and facilitate its diffusion within muscle tissues. Reversibly binds oxygen through a pentacoordinated heme iron and enables its timely and efficient release as needed during periods of heightened demand. Depending on the oxidative conditions of tissues and cells, and in addition to its ability to bind oxygen, it also has a nitrite reductase activity whereby it regulates the production of bioactive nitric oxide. Under stress conditions, like hypoxia and anoxia, it also protects cells against reactive oxygen species thanks to its pseudoperoxidase activity. In Delphinus delphis (Short-beaked common dolphin), this protein is Myoglobin (MB).